We begin with the raw amino-acid sequence, 353 residues long: Uroporphyrinogen decarboxylase (353 aa).

Substrate-binding positions include 29–33, aspartate 78, tyrosine 154, serine 209, and histidine 322; that span reads RQAGR.

Belongs to the uroporphyrinogen decarboxylase family. Homodimer.

Its subcellular location is the cytoplasm. The catalysed reaction is uroporphyrinogen III + 4 H(+) = coproporphyrinogen III + 4 CO2. It functions in the pathway porphyrin-containing compound metabolism; protoporphyrin-IX biosynthesis; coproporphyrinogen-III from 5-aminolevulinate: step 4/4. Catalyzes the decarboxylation of four acetate groups of uroporphyrinogen-III to yield coproporphyrinogen-III. This Bacillus velezensis (strain DSM 23117 / BGSC 10A6 / LMG 26770 / FZB42) (Bacillus amyloliquefaciens subsp. plantarum) protein is Uroporphyrinogen decarboxylase.